The sequence spans 967 residues: Leucine--tRNA ligase (967 aa).

Residues 43–53 carry the 'HIGH' region motif; it reads PYLSGHLHVGH. Positions 650-654 match the 'KMSKS' region motif; sequence KMSKS. Lys-653 serves as a coordination point for ATP.

Belongs to the class-I aminoacyl-tRNA synthetase family.

The protein localises to the cytoplasm. It catalyses the reaction tRNA(Leu) + L-leucine + ATP = L-leucyl-tRNA(Leu) + AMP + diphosphate. The chain is Leucine--tRNA ligase from Pyrococcus furiosus (strain ATCC 43587 / DSM 3638 / JCM 8422 / Vc1).